Here is a 428-residue protein sequence, read N- to C-terminus: Histone deacetylase 3 (428 aa).

Residues 3–316 (KTVAYFYDPD…WTYETSLLVE (314 aa)) are histone deacetylase. 3 residues coordinate 1D-myo-inositol 1,4,5,6-tetrakisphosphate: His-17, Gly-21, and Lys-25. His-135 is an active-site residue. Asp-170, His-172, and Asp-259 together coordinate Zn(2+). 1D-myo-inositol 1,4,5,6-tetrakisphosphate is bound at residue Arg-265. Basic and acidic residues-rich tracts occupy residues 388-405 (DRTD…ENYS) and 415-428 (DGDH…DVEI). The tract at residues 388-428 (DRTDEADAEERGPEENYSRPEAPNEFYDGDHDNDKESDVEI) is disordered. Position 424 is a phosphoserine (Ser-424).

Belongs to the histone deacetylase family. HD type 1 subfamily. In terms of assembly, interacts with HDAC7 and HDAC9. Interacts with DAXX, KDM4A, HDAC10 and DACH1. Found in a complex with NCOR1 and NCOR2. Component of the N-Cor repressor complex, at least composed of NCOR1, NCOR2, HDAC3, TBL1X, TBL1R, CORO2A and GPS2. Interacts with BCOR, MJD2A/JHDM3A, NRIP1, PRDM6 and SRY. Interacts with BTBD14B. Interacts with GLIS2. Interacts (via the DNA-binding domain) with NR2C1; the interaction recruits phosphorylated NR2C1 to PML bodies for sumoylation. Component of the Notch corepressor complex. Interacts with CBFA2T3 and NKAP. Interacts with APEX1; the interaction is not dependent on the acetylated status of APEX1. Interacts with ZMYND15. Interacts with SMRT/NCOR2 and BCL6 on DNA enhancer elements. Interacts with INSM1. Interacts with XBP1 isoform 1; the interaction occurs in endothelial cell (EC) under disturbed flow. Interacts (via C-terminus) with CCAR2 (via N-terminus). Interacts with and deacetylates MEF2D. Interacts with BEND3. Interacts with NKAPL. Interacts with DHX36; this interaction occurs in a RNA-dependent manner. Interacts weakly with CRY1; this interaction is enhanced in the presence of FBXL3. Interacts with FBXL3 and BMAL1. Interacts with NCOR1. Interacts with RARA. Interacts with SETD5. In terms of processing, sumoylated in vitro. Post-translationally, deubiquitinated on 'Lys-63'-linked ubiquitin chains by USP38; leading to a decreased level of histone acetylation.

The protein resides in the nucleus. The protein localises to the chromosome. It is found in the cytoplasm. Its subcellular location is the cytosol. The catalysed reaction is N(6)-acetyl-L-lysyl-[histone] + H2O = L-lysyl-[histone] + acetate. It carries out the reaction N(6)-acetyl-L-lysyl-[protein] + H2O = L-lysyl-[protein] + acetate. The enzyme catalyses N(6)-(2E)-butenoyl-L-lysyl-[protein] + H2O = (2E)-2-butenoate + L-lysyl-[protein]. It catalyses the reaction N(6)-(2-hydroxyisobutanoyl)-L-lysyl-[protein] + H2O = 2-hydroxy-2-methylpropanoate + L-lysyl-[protein]. The catalysed reaction is N(6)-[(S)-lactoyl]-L-lysyl-[protein] + H2O = (S)-lactate + L-lysyl-[protein]. Its activity is regulated as follows. Inositol tetraphosphate (1D-myo-inositol 1,4,5,6-tetrakisphosphate) promotes the histone deacetylase activity by acting as an intermolecular glue between HDAC3 and NCOR2, thereby promoting its association with the N-Cor complex, a prerequisite for the histone deacetylase activity. Its function is as follows. Histone deacetylase that catalyzes the deacetylation of lysine residues on the N-terminal part of the core histones (H2A, H2B, H3 and H4), and some other non-histone substrates. Histone deacetylation gives a tag for epigenetic repression and plays an important role in transcriptional regulation, cell cycle progression and developmental events. Histone deacetylases act via the formation of large multiprotein complexes, such as N-Cor repressor complex, which activate the histone deacetylase activity. Participates in the BCL6 transcriptional repressor activity by deacetylating the H3 'Lys-27' (H3K27) on enhancer elements, antagonizing EP300 acetyltransferase activity and repressing proximal gene expression. Acts as a molecular chaperone for shuttling phosphorylated NR2C1 to PML bodies for sumoylation. Contributes, together with XBP1 isoform 1, to the activation of NFE2L2-mediated HMOX1 transcription factor gene expression in a PI(3)K/mTORC2/Akt-dependent signaling pathway leading to endothelial cell (EC) survival under disturbed flow/oxidative stress. Regulates both the transcriptional activation and repression phases of the circadian clock in a deacetylase activity-independent manner. During the activation phase, promotes the accumulation of ubiquitinated BMAL1 at the E-boxes and during the repression phase, blocks FBXL3-mediated CRY1/2 ubiquitination and promotes the interaction of CRY1 and BMAL1. The NCOR1-HDAC3 complex regulates the circadian expression of the core clock gene BMAL1 and the genes involved in lipid metabolism in the liver. Also functions as deacetylase for non-histone targets, such as KAT5, MEF2D, MAPK14, RARA and STAT3. Serves as a corepressor of RARA, mediating its deacetylation and repression, leading to inhibition of RARE DNA element binding. In addition to protein deacetylase activity, also acts as a protein-lysine deacylase by recognizing other acyl groups: catalyzes removal of (2E)-butenoyl (crotonyl), lactoyl (lactyl) and 2-hydroxyisobutanoyl (2-hydroxyisobutyryl) acyl groups from lysine residues, leading to protein decrotonylation, delactylation and de-2-hydroxyisobutyrylation, respectively. Catalyzes decrotonylation of MAPRE1/EB1. Mediates delactylation NBN/NBS1, thereby inhibiting DNA double-strand breaks (DSBs) via homologous recombination (HR). The sequence is that of Histone deacetylase 3 from Mus musculus (Mouse).